We begin with the raw amino-acid sequence, 254 residues long: TLC domain-containing protein At5g14285 (254 aa).

The next 6 membrane-spanning stretches (helical) occupy residues 12–32 (DLPIFFSMFLTIYLIAYFIVF), 45–65 (SCLISIFHGSPAVFLATRAVF), 82–101 (TVLDFSVAYFLTDLFHYIVF), 124–144 (FLVFHGACAILGLLILAEVTS), 172–192 (LSPPFYAFYSIVRGVLGPLFF), and 211–231 (WLWISWAIVVGIAITVSILWI). In terms of domain architecture, TLC spans 38-248 (QIRPEASSCL…FSERKANKIR (211 aa)).

It localises to the membrane. The sequence is that of TLC domain-containing protein At5g14285 from Arabidopsis thaliana (Mouse-ear cress).